Here is a 186-residue protein sequence, read N- to C-terminus: ADP-ribosylation factor-like protein 8 (186 aa).

The note=Mediates targeting to membranes intramembrane region spans 1–19 (MLALINRILEWFKSIFWKE). GTP contacts are provided by residues 29-35 (QFSGKTT), 71-75 (DIGGQ), and 130-133 (NKRD).

Belongs to the small GTPase superfamily. Arf family. As to quaternary structure, interacts with tubulin. Interacts (in GTP-bound form) with Rilpl. Interacts with unc-104. As to expression, expressed throughout development, from embryo to adult stage, in different tissues such as larval motor neurons, salivary glands, testis and ovaries (at protein level).

Its subcellular location is the lysosome membrane. It is found in the synapse. It localises to the cell projection. The protein resides in the axon. The protein localises to the perikaryon. Required for normal functioning of the late endocytic pathway including lysosome motility and late endosome-lysosome fusion. Not required for the delivery of lysosomal membrane protein-containing vesicles to late endosomes. In larval motor neurons, mediates the anterograde axonal long-range transport of presynaptic lysosome-related vesicles required for presynaptic biogenesis and synaptic function. Acts downstream of Rab2 during presynaptic precursor vesicle biogenesis. Essential role in chromosome segregation. This chain is ADP-ribosylation factor-like protein 8, found in Drosophila melanogaster (Fruit fly).